Here is a 303-residue protein sequence, read N- to C-terminus: Energy-coupling factor transporter ATP-binding protein EcfA2 (303 aa).

The ABC transporter domain occupies 17–260 (LSVSNLSCFF…EAFLAHTTII (244 aa)). 54 to 61 (GDSGSGKS) lines the ATP pocket.

Belongs to the ABC transporter superfamily. Energy-coupling factor EcfA family. As to quaternary structure, forms a stable energy-coupling factor (ECF) transporter complex composed of 2 membrane-embedded substrate-binding proteins (S component), 2 ATP-binding proteins (A component) and 2 transmembrane proteins (T component).

The protein localises to the cell membrane. Its function is as follows. ATP-binding (A) component of a common energy-coupling factor (ECF) ABC-transporter complex. Unlike classic ABC transporters this ECF transporter provides the energy necessary to transport a number of different substrates. This is Energy-coupling factor transporter ATP-binding protein EcfA2 from Mycoplasma pneumoniae (strain ATCC 29342 / M129 / Subtype 1) (Mycoplasmoides pneumoniae).